The primary structure comprises 123 residues: UPF0738 protein BALH_1059 (123 aa).

It belongs to the UPF0738 family.

The chain is UPF0738 protein BALH_1059 from Bacillus thuringiensis (strain Al Hakam).